We begin with the raw amino-acid sequence, 244 residues long: MKRLRCVLAYDGTDFSGFQVQPDQVTVQGEIEAALNRVTGEDIQVFGSGRTDAGVHARGQVIHFDTASNIPMDKWRFVLNNQLPDSIVIRTVEEVDASFHARFDVQVKEYRYCIDNNPVADVFRHRYADHVRFPLDVDAMQQAAHYLVGEHDFTSFCSAKTYVEDKVRTVYGLSVEKIGDEVWVTCRGNGFLYNMVRIIVGTLVEVGQGKRNPAELREILAACDREKAGKTAPAKGLTMWEVVY.

The Nucleophile role is filled by aspartate 52. Tyrosine 110 is a binding site for substrate.

The protein belongs to the tRNA pseudouridine synthase TruA family. As to quaternary structure, homodimer.

It carries out the reaction uridine(38/39/40) in tRNA = pseudouridine(38/39/40) in tRNA. In terms of biological role, formation of pseudouridine at positions 38, 39 and 40 in the anticodon stem and loop of transfer RNAs. The protein is tRNA pseudouridine synthase A of Brevibacillus brevis (strain 47 / JCM 6285 / NBRC 100599).